The following is a 293-amino-acid chain: 33 kDa chaperonin (293 aa).

2 disulfide bridges follow: Cys-237–Cys-239 and Cys-271–Cys-274.

The protein belongs to the HSP33 family. In terms of processing, under oxidizing conditions two disulfide bonds are formed involving the reactive cysteines. Under reducing conditions zinc is bound to the reactive cysteines and the protein is inactive.

The protein resides in the cytoplasm. Redox regulated molecular chaperone. Protects both thermally unfolding and oxidatively damaged proteins from irreversible aggregation. Plays an important role in the bacterial defense system toward oxidative stress. This chain is 33 kDa chaperonin, found in Haemophilus influenzae (strain PittGG).